The primary structure comprises 96 residues: Putative pterin-4-alpha-carbinolamine dehydratase (96 aa).

This sequence belongs to the pterin-4-alpha-carbinolamine dehydratase family.

The enzyme catalyses (4aS,6R)-4a-hydroxy-L-erythro-5,6,7,8-tetrahydrobiopterin = (6R)-L-erythro-6,7-dihydrobiopterin + H2O. This is Putative pterin-4-alpha-carbinolamine dehydratase from Rhodospirillum rubrum (strain ATCC 11170 / ATH 1.1.1 / DSM 467 / LMG 4362 / NCIMB 8255 / S1).